The primary structure comprises 385 residues: 1-deoxy-D-xylulose 5-phosphate reductoisomerase (385 aa).

NADPH is bound by residues Thr-10, Gly-11, Ile-13, Gly-36, and Asn-38. Lys-123 serves as a coordination point for 1-deoxy-D-xylulose 5-phosphate. NADPH is bound at residue Glu-124. Residue Asp-148 participates in Mn(2+) binding. 1-deoxy-D-xylulose 5-phosphate contacts are provided by Ser-149, Glu-150, Ser-172, and His-195. Glu-150 serves as a coordination point for Mn(2+). Gly-201 lines the NADPH pocket. 1-deoxy-D-xylulose 5-phosphate is bound by residues Ser-208, Asn-213, Lys-214, and Glu-217. Glu-217 serves as a coordination point for Mn(2+).

This sequence belongs to the DXR family. Requires Mg(2+) as cofactor. Mn(2+) is required as a cofactor.

It carries out the reaction 2-C-methyl-D-erythritol 4-phosphate + NADP(+) = 1-deoxy-D-xylulose 5-phosphate + NADPH + H(+). Its pathway is isoprenoid biosynthesis; isopentenyl diphosphate biosynthesis via DXP pathway; isopentenyl diphosphate from 1-deoxy-D-xylulose 5-phosphate: step 1/6. Its function is as follows. Catalyzes the NADPH-dependent rearrangement and reduction of 1-deoxy-D-xylulose-5-phosphate (DXP) to 2-C-methyl-D-erythritol 4-phosphate (MEP). The chain is 1-deoxy-D-xylulose 5-phosphate reductoisomerase from Anaplasma phagocytophilum (strain HZ).